Here is a 98-residue protein sequence, read N- to C-terminus: N(2)-fixation sustaining protein CowN (98 aa).

Belongs to the CowN family.

Its function is as follows. Is required to sustain N(2)-dependent growth in the presence of low levels of carbon monoxide (CO). Probably acts by protecting the N(2) fixation ability of the nitrogenase complex, which is inactivated in the presence of CO. This is N(2)-fixation sustaining protein CowN from Trichlorobacter lovleyi (strain ATCC BAA-1151 / DSM 17278 / SZ) (Geobacter lovleyi).